The chain runs to 432 residues: Glutamyl-tRNA reductase (432 aa).

Substrate-binding positions include 49-52 (TCNR), Ser-101, 106-108 (EPQ), and Gln-112. Residue Cys-50 is the Nucleophile of the active site. 181–186 (GAGETI) lines the NADP(+) pocket. Residues 408 to 432 (PEKPGYRHPPVATPIVRTDDANPAP) are disordered.

It belongs to the glutamyl-tRNA reductase family. Homodimer.

It catalyses the reaction (S)-4-amino-5-oxopentanoate + tRNA(Glu) + NADP(+) = L-glutamyl-tRNA(Glu) + NADPH + H(+). It functions in the pathway porphyrin-containing compound metabolism; protoporphyrin-IX biosynthesis; 5-aminolevulinate from L-glutamyl-tRNA(Glu): step 1/2. Catalyzes the NADPH-dependent reduction of glutamyl-tRNA(Glu) to glutamate 1-semialdehyde (GSA). This Xanthomonas campestris pv. campestris (strain B100) protein is Glutamyl-tRNA reductase.